The sequence spans 433 residues: MAQFYSAKRRTTTRQIITVSVNDLDSFGQGVARHNGKTLFIPGLLSQENAEVTVTEDKKQYARAKVVRRLSDSPERETPRCPHFGVCGGCQQQHASVDLQQRSKSAALARLMKHEVSEVIADVPWGYRRRARLSLNYLPKTQQLQMGFRKAGSSDIVDVKQCPILVPQLEALLPKVRACLGSLQAMRHLGHVELVQATSGTLMILRHTAPLSSADREKLERFSHSEGLDLYLAPDSEIFETVSGEMPWYDSNGLRLTFSPRDFIQVNAGVNQKMVARALEWLDVQPEDRVLDLFCGMGNFTLPLATQAASVVGVEGVPALVEKGQQNARLNGLQNVTFYHENLEEDVTKQPWAKNGFDKVLLDPARAGAAGVMQQIIKLEPIRIVYVSCNPATLARDSEALLKAGYTIARLAMLDMFPHTGHLESMVLFSRVK.

A TRAM domain is found at 10-68 (RTTTRQIITVSVNDLDSFGQGVARHNGKTLFIPGLLSQENAEVTVTEDKKQYARAKVVR). Cys81, Cys87, Cys90, and Cys162 together coordinate [4Fe-4S] cluster. S-adenosyl-L-methionine contacts are provided by Gln265, Phe294, Asn299, Glu315, Asn342, and Asp363. Catalysis depends on Cys389, which acts as the Nucleophile.

Belongs to the class I-like SAM-binding methyltransferase superfamily. RNA M5U methyltransferase family. RlmD subfamily.

It carries out the reaction uridine(1939) in 23S rRNA + S-adenosyl-L-methionine = 5-methyluridine(1939) in 23S rRNA + S-adenosyl-L-homocysteine + H(+). In terms of biological role, catalyzes the formation of 5-methyl-uridine at position 1939 (m5U1939) in 23S rRNA. In Shigella dysenteriae serotype 1 (strain Sd197), this protein is 23S rRNA (uracil(1939)-C(5))-methyltransferase RlmD.